The primary structure comprises 179 residues: Ubiquitin-conjugating enzyme E2 C (179 aa).

The disordered stretch occupies residues 1-31 (MASQNRDPAATSVAAARKGAEPSGGAARGPV). At Ala2 the chain carries N-acetylalanine. Residue Ser3 is modified to Phosphoserine. Residues 30 to 175 (PVGKRLQQEL…LQETYSKQVT (146 aa)) enclose the UBC core domain. Catalysis depends on Cys114, which acts as the Glycyl thioester intermediate.

It belongs to the ubiquitin-conjugating enzyme family. As to quaternary structure, component of the APC/C complex, composed of at least 14 distinct subunits that assemble into a complex of at least 19 chains with a combined molecular mass of around 1.2 MDa. Within this complex, directly interacts with ANAPC2. In terms of processing, autoubiquitinated by the APC/C complex, leading to its degradation by the proteasome. Its degradation plays a central role in APC/C regulation, allowing cyclin-A accumulation before S phase entry. APC/C substrates inhibit the autoubiquitination of UBE2C/UBCH10 but not its E2 function, hence APC/C remaining active until its substrates have been destroyed.

The enzyme catalyses S-ubiquitinyl-[E1 ubiquitin-activating enzyme]-L-cysteine + [E2 ubiquitin-conjugating enzyme]-L-cysteine = [E1 ubiquitin-activating enzyme]-L-cysteine + S-ubiquitinyl-[E2 ubiquitin-conjugating enzyme]-L-cysteine.. The catalysed reaction is S-ubiquitinyl-[E1 ubiquitin-activating enzyme]-L-cysteine + [acceptor protein]-L-lysine = [E1 ubiquitin-activating enzyme]-L-cysteine + N(6)-monoubiquitinyl-[acceptor protein]-L-lysine.. The protein operates within protein modification; protein ubiquitination. In terms of biological role, accepts ubiquitin from the E1 complex and catalyzes its covalent attachment to other proteins. In vitro catalyzes 'Lys-11'- and 'Lys-48'-linked polyubiquitination. Acts as an essential factor of the anaphase promoting complex/cyclosome (APC/C), a cell cycle-regulated ubiquitin ligase that controls progression through mitosis. Acts by initiating 'Lys-11'-linked polyubiquitin chains on APC/C substrates, leading to the degradation of APC/C substrates by the proteasome and promoting mitotic exit. The sequence is that of Ubiquitin-conjugating enzyme E2 C (UBE2C) from Homo sapiens (Human).